Consider the following 64-residue polypeptide: MSGREGGKKKPLKQPKKSNKDMDEDEIAFKQKQKEDQKKLDEMKGKAAQKGPLTGGGIKKSGKK.

Residues Met1–Lys64 are disordered. The stretch at Asp21–Lys50 forms a coiled coil. The span at Ile27 to Gly45 shows a compositional bias: basic and acidic residues. Positions Leu53–Lys64 are enriched in gly residues.

This sequence belongs to the TMA7 family.

In Xenopus tropicalis (Western clawed frog), this protein is Translation machinery-associated protein 7 (tma7).